The primary structure comprises 460 residues: tRNA modification GTPase MnmE (460 aa).

The (6S)-5-formyl-5,6,7,8-tetrahydrofolate site is built by arginine 29, glutamate 86, and lysine 126. In terms of domain architecture, TrmE-type G spans 222 to 383 (GMRVVIAGRP…LAEHLKECMG (162 aa)). Asparagine 232 contacts K(+). Residues 232 to 237 (NAGKSS), 251 to 257 (TAIAGTT), 276 to 279 (DTAG), and 341 to 344 (NKAD) each bind GTP. Serine 236 provides a ligand contact to Mg(2+). Positions 251, 253, and 256 each coordinate K(+). Threonine 257 is a Mg(2+) binding site. (6S)-5-formyl-5,6,7,8-tetrahydrofolate is bound at residue lysine 460.

Belongs to the TRAFAC class TrmE-Era-EngA-EngB-Septin-like GTPase superfamily. TrmE GTPase family. In terms of assembly, homodimer. Heterotetramer of two MnmE and two MnmG subunits. It depends on K(+) as a cofactor.

The protein localises to the cytoplasm. In terms of biological role, exhibits a very high intrinsic GTPase hydrolysis rate. Involved in the addition of a carboxymethylaminomethyl (cmnm) group at the wobble position (U34) of certain tRNAs, forming tRNA-cmnm(5)s(2)U34. The chain is tRNA modification GTPase MnmE from Pseudoalteromonas atlantica (strain T6c / ATCC BAA-1087).